Here is a 361-residue protein sequence, read N- to C-terminus: tRNA/tmRNA (uracil-C(5))-methyltransferase (361 aa).

5 residues coordinate S-adenosyl-L-methionine: Gln185, Tyr213, Asn218, Glu234, and Asp294. Cys319 (nucleophile) is an active-site residue. Glu353 (proton acceptor) is an active-site residue.

This sequence belongs to the class I-like SAM-binding methyltransferase superfamily. RNA M5U methyltransferase family. TrmA subfamily.

The catalysed reaction is uridine(54) in tRNA + S-adenosyl-L-methionine = 5-methyluridine(54) in tRNA + S-adenosyl-L-homocysteine + H(+). It catalyses the reaction uridine(341) in tmRNA + S-adenosyl-L-methionine = 5-methyluridine(341) in tmRNA + S-adenosyl-L-homocysteine + H(+). Dual-specificity methyltransferase that catalyzes the formation of 5-methyluridine at position 54 (m5U54) in all tRNAs, and that of position 341 (m5U341) in tmRNA (transfer-mRNA). This Azotobacter vinelandii (strain DJ / ATCC BAA-1303) protein is tRNA/tmRNA (uracil-C(5))-methyltransferase.